A 368-amino-acid polypeptide reads, in one-letter code: MGSPLQQLSDAGVAVWLDDISRQRLRSGNLAELIAQRNVVGVTSNPTIFAKALAEGDAYDGQLRDLAVRGVSVEEAVRLITAYDIRWAADVLRPVYEATDGVDGRVSLEVDPRLARDTERTVAEARALWWLVDRPNLMIKIPATVEGLPAITAALAEGISVNVTLIFSLERYRAVMDAFLAGLEQAQQAGRDLSTIHSVASFFVSRVDTEVDKRLSKIATEEAVALRGKTALANARLAYAAYEEVFSSARWTALAQAGARPQRPLWASTGVKDPELPDTLYVTELVAPGTVNTMPQATLDAVADHGTITGDTVRGHYDAARAHLDAVESVGVSMSDVVETLEDEGVDKFVKSWEELLDRVAQQLAAHT.

Catalysis depends on K140, which acts as the Schiff-base intermediate with substrate.

Belongs to the transaldolase family. Type 2 subfamily.

Its subcellular location is the cytoplasm. The catalysed reaction is D-sedoheptulose 7-phosphate + D-glyceraldehyde 3-phosphate = D-erythrose 4-phosphate + beta-D-fructose 6-phosphate. Its pathway is carbohydrate degradation; pentose phosphate pathway; D-glyceraldehyde 3-phosphate and beta-D-fructose 6-phosphate from D-ribose 5-phosphate and D-xylulose 5-phosphate (non-oxidative stage): step 2/3. Its function is as follows. Transaldolase is important for the balance of metabolites in the pentose-phosphate pathway. This is Transaldolase from Thermobifida fusca (strain YX).